A 367-amino-acid chain; its full sequence is MHFPLIPMVKLEEIKQIFKPKLLPIIWNKTKLTLLDQSRLPFEKIYVDVTKVEEVSDAIRTMKVRGAPAIGITAGYGMVLAIQDSISLEKAISDLTKAKKILDESRPTAVNLMWATSRMLNKAKDLVEQGNAKSVKELKELLEIEANKIFEEEYEAELKIGLYGIEKVNDGDTILTQCNAGGLATGTGLGTALAPAKLANALGIKVSVIAPETRPWLQGSRLTVYELMEENIPVTLIADTAVGLVMFKKMVNSVMVGADRILSDGHVFNKIGTFKEAVIAHELGIPFYALAPSSTFDMISTVDQVKIEERSPDEVRSIKGVYISPKEVKVYNPVFDVTPPKYVSAIITEYGIIYPPFDKNMRRMLGK.

Substrate contacts are provided by residues 65-67 (RGA), R106, and Q218. Catalysis depends on D259, which acts as the Proton donor. 269–270 (NK) contacts substrate.

It belongs to the eIF-2B alpha/beta/delta subunits family. MtnA subfamily.

The catalysed reaction is 5-(methylsulfanyl)-alpha-D-ribose 1-phosphate = 5-(methylsulfanyl)-D-ribulose 1-phosphate. Its function is as follows. Catalyzes the interconversion of methylthioribose-1-phosphate (MTR-1-P) into methylthioribulose-1-phosphate (MTRu-1-P). This Sulfolobus acidocaldarius (strain ATCC 33909 / DSM 639 / JCM 8929 / NBRC 15157 / NCIMB 11770) protein is Putative methylthioribose-1-phosphate isomerase.